We begin with the raw amino-acid sequence, 255 residues long: tRNA (guanine-N(1)-)-methyltransferase (255 aa).

S-adenosyl-L-methionine is bound by residues Gly-113 and 133–138; that span reads IGDYVL.

The protein belongs to the RNA methyltransferase TrmD family. As to quaternary structure, homodimer.

Its subcellular location is the cytoplasm. The catalysed reaction is guanosine(37) in tRNA + S-adenosyl-L-methionine = N(1)-methylguanosine(37) in tRNA + S-adenosyl-L-homocysteine + H(+). In terms of biological role, specifically methylates guanosine-37 in various tRNAs. In Klebsiella pneumoniae (strain 342), this protein is tRNA (guanine-N(1)-)-methyltransferase.